The primary structure comprises 263 residues: Ribonuclease HII (263 aa).

The RNase H type-2 domain maps to 39-257 (AFFTGIDEAG…VKPAAAPHAA (219 aa)). A divalent metal cation contacts are provided by D45, E46, and D157.

It belongs to the RNase HII family. It depends on Mn(2+) as a cofactor. Mg(2+) serves as cofactor.

Its subcellular location is the cytoplasm. It carries out the reaction Endonucleolytic cleavage to 5'-phosphomonoester.. Functionally, endonuclease that specifically degrades the RNA of RNA-DNA hybrids. This is Ribonuclease HII from Oleidesulfovibrio alaskensis (strain ATCC BAA-1058 / DSM 17464 / G20) (Desulfovibrio alaskensis).